The chain runs to 428 residues: Adenylosuccinate synthetase (428 aa).

Residues 12-18 (GDEGKGK) and 40-42 (GHS) contribute to the GTP site. Asp-13 (proton acceptor) is an active-site residue. Mg(2+) is bound by residues Asp-13 and Gly-40. IMP is bound by residues 13–16 (DEGK), 38–41 (NAGH), Thr-128, Arg-142, Gln-223, Thr-238, and Arg-302. The active-site Proton donor is the His-41. 298 to 304 (VTTGRPR) is a substrate binding site. GTP contacts are provided by residues Arg-304, 330–332 (KLD), and 412–414 (GTG).

Belongs to the adenylosuccinate synthetase family. As to quaternary structure, homodimer. Requires Mg(2+) as cofactor.

It localises to the cytoplasm. The catalysed reaction is IMP + L-aspartate + GTP = N(6)-(1,2-dicarboxyethyl)-AMP + GDP + phosphate + 2 H(+). Its pathway is purine metabolism; AMP biosynthesis via de novo pathway; AMP from IMP: step 1/2. Functionally, plays an important role in the de novo pathway of purine nucleotide biosynthesis. Catalyzes the first committed step in the biosynthesis of AMP from IMP. This Bifidobacterium longum subsp. infantis (strain ATCC 15697 / DSM 20088 / JCM 1222 / NCTC 11817 / S12) protein is Adenylosuccinate synthetase.